Consider the following 442-residue polypeptide: GTPase Der (442 aa).

EngA-type G domains are found at residues 2 to 167 (RTIA…PIQN) and 175 to 351 (FKFC…EQAM). GTP is bound by residues 8-15 (GKPNVGKS), 55-59 (DTGGI), 119-122 (NKIE), 181-188 (GRPNVGKS), 228-232 (DTAGI), and 293-296 (NKWD). The 85-residue stretch at 352–436 (RKIATSLLND…PITLYWQDKN (85 aa)) folds into the KH-like domain.

Belongs to the TRAFAC class TrmE-Era-EngA-EngB-Septin-like GTPase superfamily. EngA (Der) GTPase family. In terms of assembly, associates with the 50S ribosomal subunit.

GTPase that plays an essential role in the late steps of ribosome biogenesis. This is GTPase Der from Ureaplasma parvum serovar 3 (strain ATCC 27815 / 27 / NCTC 11736).